A 204-amino-acid polypeptide reads, in one-letter code: Large ribosomal subunit protein eL15y (204 aa).

It belongs to the eukaryotic ribosomal protein eL15 family.

The sequence is that of Large ribosomal subunit protein eL15y (SB62) from Picea mariana (Black spruce).